The sequence spans 426 residues: NADH-quinone oxidoreductase subunit H 1 (426 aa).

The next 10 helical transmembrane spans lie at 22–42, 91–111, 124–144, 163–183, 206–226, 258–278, 299–319, 331–351, 357–377, and 392–412; these read LWAT…VMLM, FLFW…YLVI, IGVL…VMAG, MVSY…MTSL, FIFK…IAMV, LFFL…VTLW, FSVF…IGWV, AIGL…LLIP, VSDI…YIWY, and IGWK…AVLG.

It belongs to the complex I subunit 1 family. As to quaternary structure, NDH-1 is composed of 14 different subunits. Subunits NuoA, H, J, K, L, M, N constitute the membrane sector of the complex.

It is found in the cell inner membrane. It carries out the reaction a quinone + NADH + 5 H(+)(in) = a quinol + NAD(+) + 4 H(+)(out). Its function is as follows. NDH-1 shuttles electrons from NADH, via FMN and iron-sulfur (Fe-S) centers, to quinones in the respiratory chain. The immediate electron acceptor for the enzyme in this species is believed to be ubiquinone. Couples the redox reaction to proton translocation (for every two electrons transferred, four hydrogen ions are translocated across the cytoplasmic membrane), and thus conserves the redox energy in a proton gradient. This subunit may bind ubiquinone. In Koribacter versatilis (strain Ellin345), this protein is NADH-quinone oxidoreductase subunit H 1.